The chain runs to 642 residues: Assimilatory sulfite reductase (ferredoxin), chloroplastic (642 aa).

The transit peptide at methionine 1 to alanine 61 directs the protein to the chloroplast. Residues proline 46–arginine 74 form a disordered region. The [4Fe-4S] cluster site is built by cysteine 503, cysteine 509, cysteine 549, and cysteine 553. Position 553 (cysteine 553) interacts with siroheme.

The protein belongs to the nitrite and sulfite reductase 4Fe-4S domain family. Monomer. Interacts with ferredoxin. Siroheme serves as cofactor. [4Fe-4S] cluster is required as a cofactor. Phosphorylated; this phosphorylation reduces DNA-binding. Present in leaves and roots.

It is found in the plastid. The protein resides in the chloroplast stroma. It localises to the chloroplast nucleoid. The protein localises to the plastid stroma. It carries out the reaction hydrogen sulfide + 6 oxidized [2Fe-2S]-[ferredoxin] + 3 H2O = sulfite + 6 reduced [2Fe-2S]-[ferredoxin] + 7 H(+). Essential protein with sulfite reductase activity required in assimilatory sulfate reduction pathway during both primary and secondary metabolism and thus involved in development and growth. Functionally, DNA-binding protein that binds to both double-stranded and single-stranded DNA without significant sequence specificity to reversibly repress the transcriptional activity of chloroplast nucleoids by promoting DNA compaction and possibly regulate DNA replication. The sequence is that of Assimilatory sulfite reductase (ferredoxin), chloroplastic (SIR) from Arabidopsis thaliana (Mouse-ear cress).